The chain runs to 143 residues: 3-dehydroquinate dehydratase (143 aa).

Residue tyrosine 22 is the Proton acceptor of the active site. 3 residues coordinate substrate: asparagine 73, histidine 79, and aspartate 86. Catalysis depends on histidine 99, which acts as the Proton donor. Substrate is bound by residues isoleucine 100–serine 101 and arginine 110.

The protein belongs to the type-II 3-dehydroquinase family. Homododecamer.

It carries out the reaction 3-dehydroquinate = 3-dehydroshikimate + H2O. The protein operates within metabolic intermediate biosynthesis; chorismate biosynthesis; chorismate from D-erythrose 4-phosphate and phosphoenolpyruvate: step 3/7. Functionally, catalyzes a trans-dehydration via an enolate intermediate. The sequence is that of 3-dehydroquinate dehydratase from Salinispora arenicola (strain CNS-205).